A 274-amino-acid polypeptide reads, in one-letter code: Large ribosomal subunit protein uL2cz/uL2cy (274 aa).

Disordered stretches follow at residues 1–21 and 224–252; these read MAIH…VDSQ and NPVD…GYPA.

The protein belongs to the universal ribosomal protein uL2 family. As to quaternary structure, part of the 50S ribosomal subunit.

The protein localises to the plastid. The protein resides in the chloroplast. This chain is Large ribosomal subunit protein uL2cz/uL2cy (rpl2-A), found in Olimarabidopsis pumila (Dwarf rocket).